Consider the following 140-residue polypeptide: 6,7-dimethyl-8-ribityllumazine synthase (140 aa).

5-amino-6-(D-ribitylamino)uracil-binding positions include Phe-11, 42–44, and 66–68; these read ALE and VVI. 71–72 contributes to the (2S)-2-hydroxy-3-oxobutyl phosphate binding site; sequence ET. Residue His-74 is the Proton donor of the active site. Asn-98 contributes to the 5-amino-6-(D-ribitylamino)uracil binding site. (2S)-2-hydroxy-3-oxobutyl phosphate is bound at residue Arg-112.

The protein belongs to the DMRL synthase family.

The catalysed reaction is (2S)-2-hydroxy-3-oxobutyl phosphate + 5-amino-6-(D-ribitylamino)uracil = 6,7-dimethyl-8-(1-D-ribityl)lumazine + phosphate + 2 H2O + H(+). Its pathway is cofactor biosynthesis; riboflavin biosynthesis; riboflavin from 2-hydroxy-3-oxobutyl phosphate and 5-amino-6-(D-ribitylamino)uracil: step 1/2. Functionally, catalyzes the formation of 6,7-dimethyl-8-ribityllumazine by condensation of 5-amino-6-(D-ribitylamino)uracil with 3,4-dihydroxy-2-butanone 4-phosphate. This is the penultimate step in the biosynthesis of riboflavin. The sequence is that of 6,7-dimethyl-8-ribityllumazine synthase from Erythrobacter litoralis (strain HTCC2594).